A 507-amino-acid chain; its full sequence is Chromosomal replication initiator protein DnaA (507 aa).

Residues 1–112 (MTDDPGSGFT…PATDEADDTT (112 aa)) are domain I, interacts with DnaA modulators. The segment at 99–155 (RIAPPATDEADDTTVPPSENPATTSPDTTTDNDEIDDSAAARGDNQHSWPSYFTERP) is disordered. Over residues 113 to 127 (VPPSENPATTSPDTT) the composition is skewed to polar residues. The domain II stretch occupies residues 113 to 166 (VPPSENPATTSPDTTTDNDEIDDSAAARGDNQHSWPSYFTERPHNTDSATAGVT). Residues 167–383 (SLNRRYTFDT…GALIRVTAFA (217 aa)) form a domain III, AAA+ region region. ATP-binding residues include glycine 211, glycine 213, lysine 214, and threonine 215. Positions 384–507 (SLNKTPIDKA…TTRIRQRSKR (124 aa)) are domain IV, binds dsDNA.

The protein belongs to the DnaA family. Oligomerizes as a right-handed, spiral filament on DNA at oriC.

It localises to the cytoplasm. In terms of biological role, plays an essential role in the initiation and regulation of chromosomal replication. ATP-DnaA binds to the origin of replication (oriC) to initiate formation of the DNA replication initiation complex once per cell cycle. Binds the DnaA box (a 9 base pair repeat at the origin) and separates the double-stranded (ds)DNA. Forms a right-handed helical filament on oriC DNA; dsDNA binds to the exterior of the filament while single-stranded (ss)DNA is stabiized in the filament's interior. The ATP-DnaA-oriC complex binds and stabilizes one strand of the AT-rich DNA unwinding element (DUE), permitting loading of DNA polymerase. After initiation quickly degrades to an ADP-DnaA complex that is not apt for DNA replication. Binds acidic phospholipids. In Mycobacterium tuberculosis (strain ATCC 25177 / H37Ra), this protein is Chromosomal replication initiator protein DnaA.